We begin with the raw amino-acid sequence, 430 residues long: MAITLRQSDADFEQRFAAFLTTKREVSEDVDAGVRQIIARVRAEGDAALIDYTQRFDRADLKSLGIAVSKQDIAAAYETADPKAIEALEFARDRIRSHHERQRPKDDRYTDATGVELGWRWTAIEAVGLYVPGGTASYPSSVLMNAVPARVAGVERVVMVVPAPGGIINPLVLVAADISGVTEIYRVGGAHAIAALAYGTETIKPVAKIVGPGNAYVAAAKRQVFGTVGIDMIAGPSEVLVVADGSNNADWIAADLLAQAEHDVSAQSILITDDPAFGKAVEQAVERQLQTLPRGETAAASWRDFGAVIEVATIEAALPLVDRIAAEHVELAIDDAEGFLSRMRNAGAVFLGRHTPEAIGDYVGGSNHVLPTARSARFSSGLSVLDFVKRTSILKLGPEQLRVLAPAAIALAKAEGLDAHGRSVAIRLNM.

Positions 237, 259, and 262 each coordinate substrate. 2 residues coordinate Zn(2+): Gln259 and His262. Residues Glu327 and His328 each act as proton acceptor in the active site. Residues His328, Asp361, Glu415, and His420 each contribute to the substrate site. Asp361 contacts Zn(2+). Residue His420 participates in Zn(2+) binding.

This sequence belongs to the histidinol dehydrogenase family. Requires Zn(2+) as cofactor.

The enzyme catalyses L-histidinol + 2 NAD(+) + H2O = L-histidine + 2 NADH + 3 H(+). The protein operates within amino-acid biosynthesis; L-histidine biosynthesis; L-histidine from 5-phospho-alpha-D-ribose 1-diphosphate: step 9/9. In terms of biological role, catalyzes the sequential NAD-dependent oxidations of L-histidinol to L-histidinaldehyde and then to L-histidine. The chain is Histidinol dehydrogenase from Mesorhizobium japonicum (strain LMG 29417 / CECT 9101 / MAFF 303099) (Mesorhizobium loti (strain MAFF 303099)).